Here is a 186-residue protein sequence, read N- to C-terminus: Large ribosomal subunit protein bL9 (186 aa).

The interval 153–186 is disordered; that stretch reads ELRQVKSQSQKSQQQEAKQNEVGEATDSDKADQK. The segment covering 157–169 has biased composition (low complexity); it reads VKSQSQKSQQQEA.

This sequence belongs to the bacterial ribosomal protein bL9 family.

Functionally, binds to the 23S rRNA. This Wolbachia sp. subsp. Brugia malayi (strain TRS) protein is Large ribosomal subunit protein bL9.